The chain runs to 329 residues: Putative GTPase Obg (329 aa).

Positions 1-159 constitute an Obg domain; the sequence is MQFIDQARIM…WPLQLELKLL (159 aa). One can recognise an OBG-type G domain in the interval 160–328; the sequence is AEVGIIGLPN…LKTQIWQQLG (169 aa). Residues 166–173, 191–195, 213–216, 280–283, and 309–311 each bind GTP; these read GLPNAGKS, FTTLI, DIPG, SKIE, and SSA. 2 residues coordinate Mg(2+): Ser173 and Thr193.

Belongs to the TRAFAC class OBG-HflX-like GTPase superfamily. OBG GTPase family. In terms of assembly, monomer. Mg(2+) is required as a cofactor.

The protein localises to the plastid. It localises to the organellar chromatophore. Functionally, an essential GTPase which binds GTP, GDP and possibly (p)ppGpp with moderate affinity, with high nucleotide exchange rates and a fairly low GTP hydrolysis rate. This Paulinella chromatophora protein is Putative GTPase Obg.